A 190-amino-acid chain; its full sequence is dCTP deaminase, dUMP-forming (190 aa).

DCTP-binding positions include 101 to 106 (KSSLGR), aspartate 119, 127 to 129 (TLE), glutamine 148, tyrosine 162, and glutamine 174. Catalysis depends on glutamate 129, which acts as the Proton donor/acceptor. A disordered region spans residues 162-184 (YGSAKVGSKYQGQRGPTPSRSYQ). Residues 171–184 (YQGQRGPTPSRSYQ) are compositionally biased toward polar residues.

It belongs to the dCTP deaminase family. Homotrimer.

The catalysed reaction is dCTP + 2 H2O = dUMP + NH4(+) + diphosphate. It functions in the pathway pyrimidine metabolism; dUMP biosynthesis; dUMP from dCTP: step 1/1. In terms of biological role, bifunctional enzyme that catalyzes both the deamination of dCTP to dUTP and the hydrolysis of dUTP to dUMP without releasing the toxic dUTP intermediate. The protein is dCTP deaminase, dUMP-forming of Mycobacterium sp. (strain JLS).